A 138-amino-acid chain; its full sequence is Phospholipase A2 homolog (138 aa).

Residues 1-16 form the signal peptide; the sequence is MRALWIVAVWLIGVEG. Cystine bridges form between C42–C131, C44–C60, C59–C111, C65–C138, C66–C104, C73–C97, and C91–C102. An important for membrane-damaging activities in eukaryotes and bacteria; heparin-binding region spans residues 121-133; the sequence is KKYTYYPNFLCKG.

This sequence belongs to the phospholipase A2 family. Group II subfamily. S49 sub-subfamily. In terms of assembly, monomer. In terms of tissue distribution, expressed by the venom gland.

The protein localises to the secreted. In terms of biological role, snake venom phospholipase A2 homolog that lacks enzymatic activity. Shows high myotoxin activities and displays edema-inducing activities. Has cytotoxic activities against HUVEC cells (LC(50)=5.0 uL) and human lung adenocarcinoma A549 cells (LC(50)=5.2 uL). The polypeptide is Phospholipase A2 homolog (Echis ocellatus (Ocellated saw-scaled viper)).